Reading from the N-terminus, the 380-residue chain is MNVELQLDPRRTVPAWLAYGTPVLTVLAALAVGGVALVALNVDPVDAYGVMFVETLTSQFGLTEVLVRAVPLILAGLAVYLPLKAGLFNIGAEGQLLLGALAGTWVAVNVSLPAVALLPLMFLAACVAGAFWAGIPAWLRAKWDVNEIITSLLLTFVAQELQSYLLRGPMQGGTGNFPQSARFSDAATLPPLAGLVPGGESIPLFADVHAGLLVAVAAVVATYVVMTKTRLGFEVTFVGSNDEAARQAGMSRHTVYLFVFLLGGAFAALGGIAEIAGSQGRFRAAFAPGYGFTAIPIALLGRNSAVKVTLAGLFFAVLFVGGSSVEVAFGVPAALVEIIQALVILFLITSEFFKRYRVGIAFDRRGNDAPADATGGDARW.

10 consecutive transmembrane segments (helical) span residues 20–40 (GTPVLTVLAALAVGGVALVAL), 59–81 (QFGLTEVLVRAVPLILAGLAVYL), 94–114 (GQLLLGALAGTWVAVNVSLPA), 115–135 (VALLPLMFLAACVAGAFWAGI), 148–166 (IITSLLLTFVAQELQSYLL), 202–222 (IPLFADVHAGLLVAVAAVVAT), 255–275 (VYLFVFLLGGAFAALGGIAEI), 282–301 (FRAAFAPGYGFTAIPIALLG), 305–325 (AVKVTLAGLFFAVLFVGGSSV), and 328–348 (AFGVPAALVEIIQALVILFLI).

Belongs to the binding-protein-dependent transport system permease family. The complex is composed of two ATP-binding proteins (TsgD13), two transmembrane proteins (TsgB13 and TsgC13) and a solute-binding protein (TsgA13).

The protein resides in the cell membrane. Its function is as follows. Part of an ABC transporter complex involved in glucose import. Responsible for the translocation of the substrate across the membrane. In Haloferax volcanii (strain ATCC 29605 / DSM 3757 / JCM 8879 / NBRC 14742 / NCIMB 2012 / VKM B-1768 / DS2) (Halobacterium volcanii), this protein is Glucose ABC transporter permease protein TsgB13 (tsgB13).